A 386-amino-acid polypeptide reads, in one-letter code: Succinate--CoA ligase [ADP-forming] subunit beta (386 aa).

The 236-residue stretch at Lys9–Glu244 folds into the ATP-grasp domain. ATP contacts are provided by residues Lys46, Gly53–Gly55, Glu99, Cys102, and Glu107. Mg(2+) is bound by residues Asn199 and Asp213. Substrate contacts are provided by residues Asn264 and Gly321–Met323.

Belongs to the succinate/malate CoA ligase beta subunit family. Heterotetramer of two alpha and two beta subunits. Mg(2+) is required as a cofactor.

It catalyses the reaction succinate + ATP + CoA = succinyl-CoA + ADP + phosphate. The catalysed reaction is GTP + succinate + CoA = succinyl-CoA + GDP + phosphate. The protein operates within carbohydrate metabolism; tricarboxylic acid cycle; succinate from succinyl-CoA (ligase route): step 1/1. In terms of biological role, succinyl-CoA synthetase functions in the citric acid cycle (TCA), coupling the hydrolysis of succinyl-CoA to the synthesis of either ATP or GTP and thus represents the only step of substrate-level phosphorylation in the TCA. The beta subunit provides nucleotide specificity of the enzyme and binds the substrate succinate, while the binding sites for coenzyme A and phosphate are found in the alpha subunit. The sequence is that of Succinate--CoA ligase [ADP-forming] subunit beta from Bacillus thuringiensis (strain Al Hakam).